A 617-amino-acid polypeptide reads, in one-letter code: Glutamyl-tRNA(Gln) amidotransferase subunit E (617 aa).

This sequence belongs to the GatB/GatE family. GatE subfamily. As to quaternary structure, heterodimer of GatD and GatE.

The enzyme catalyses L-glutamyl-tRNA(Gln) + L-glutamine + ATP + H2O = L-glutaminyl-tRNA(Gln) + L-glutamate + ADP + phosphate + H(+). In terms of biological role, allows the formation of correctly charged Gln-tRNA(Gln) through the transamidation of misacylated Glu-tRNA(Gln) in organisms which lack glutaminyl-tRNA synthetase. The reaction takes place in the presence of glutamine and ATP through an activated gamma-phospho-Glu-tRNA(Gln). The GatDE system is specific for glutamate and does not act on aspartate. This is Glutamyl-tRNA(Gln) amidotransferase subunit E from Natronomonas pharaonis (strain ATCC 35678 / DSM 2160 / CIP 103997 / JCM 8858 / NBRC 14720 / NCIMB 2260 / Gabara) (Halobacterium pharaonis).